Here is a 611-residue protein sequence, read N- to C-terminus: Protein KINASE OF THE OUTER CHLOROPLAST MEMBRANE 1 (611 aa).

The Cytoplasmic portion of the chain corresponds to 1-555; sequence MASKIIAGKP…LEDFHWAVRP (555 aa). The Protein kinase domain maps to 39-306; it reads LKLRHRIGRG…TDILLVLKSL (268 aa). Residues 45–53 and lysine 74 each bind ATP; that span reads IGRGPFGDV. Residues 556 to 572 traverse the membrane as a helical segment; sequence LLIAMGLLTAMKLGICV. The Chloroplast intermembrane segment spans residues 573–611; it reads RKKIGRSKDGKQRDGSTGQGDCKIPDGKGSDKSKWLVFF. Residues 579–606 form a disordered region; sequence SKDGKQRDGSTGQGDCKIPDGKGSDKSK. Residues 595–606 show a composition bias toward basic and acidic residues; that stretch reads KIPDGKGSDKSK.

The protein belongs to the protein kinase superfamily. Ser/Thr protein kinase family. Associates with the TOC complex containing, at least, translocons at the chloroplast envelope (e.g. TOCs and TICs such as TOC159, TOC75, TOC33 and TIC56).

Its subcellular location is the plastid. It is found in the chloroplast outer membrane. It catalyses the reaction L-seryl-[protein] + ATP = O-phospho-L-seryl-[protein] + ADP + H(+). The catalysed reaction is L-threonyl-[protein] + ATP = O-phospho-L-threonyl-[protein] + ADP + H(+). Serine/threonine protein kinase acting as a regulatory component of the plastid protein import machinery by phosphorylating import receptors (e.g. the A-domain of TOC159, TOC120 and TOC132). Supports preprotein import and contributes to efficient chloroplast biogenesis, thus being required for survival during de-etiolation. This Arabidopsis thaliana (Mouse-ear cress) protein is Protein KINASE OF THE OUTER CHLOROPLAST MEMBRANE 1.